Reading from the N-terminus, the 316-residue chain is Olfactory receptor class A-like protein 1 (316 aa).

Residues 1 to 8 (MDLCVTIK) are Extracellular-facing. Residues 9–29 (GVSFLLQAGLGILANALVLLA) form a helical membrane-spanning segment. Topologically, residues 30–39 (YAHIRLAEAR) are cytoplasmic. The chain crosses the membrane as a helical span at residues 40-60 (LQPVDAILCHLALVDLLLLLT). The Extracellular portion of the chain corresponds to 61-97 (RGVPQTMTVFGMRNLLDDTGCKVVIYTYRIARALSVC). A disulfide bond links cysteine 81 and cysteine 169. Residues 98 to 118 (ITCMLSVFQAVTVAPAAGPLL) form a helical membrane-spanning segment. Residues 119 to 132 (SGVKARLPQLLAPT) lie on the Cytoplasmic side of the membrane. A helical transmembrane segment spans residues 133–153 (FAALWFINMAVCIAAPFFSVA). Topologically, residues 154-187 (PRNGTVPPFTLNLGFCHVDFHDNLSYVLNGVAVS) are extracellular. Residues asparagine 156 and asparagine 176 are each glycosylated (N-linked (GlcNAc...) asparagine). The helical transmembrane segment at 188-208 (VRDFAFVGAMLASSGFILLLL) threads the bilayer. The Cytoplasmic portion of the chain corresponds to 209–233 (HRHRRQVRAVRRSQGSTMETRAART). The chain crosses the membrane as a helical span at residues 234–254 (VLMLVILYSVFFGIDNVIWIY). The Extracellular segment spans residues 255–264 (MLTVAQVPPV). The chain crosses the membrane as a helical span at residues 265 to 285 (VADMRVFFSSCYASLSPFLII). Residues 286 to 316 (SSNRKLKARMVCATSEQERQAEDGKNSSGKN) are Cytoplasmic-facing.

Belongs to the G-protein coupled receptor 1 family. As to expression, highly expressed in the olfactory rosette where it localizes to a subset of olfactory sensory neurons, mainly in the apical region of the neuroepithelium. Not detected in other tissues tested.

It is found in the cell membrane. Functionally, probable pheromone receptor. Shows high specificity for 4-hydroxyphenylacetic acid. Activation of the receptor stimulates intracellular calcium release. The protein is Olfactory receptor class A-like protein 1 of Danio rerio (Zebrafish).